We begin with the raw amino-acid sequence, 455 residues long: Serine incorporator 2 (455 aa).

The next 11 helical transmembrane spans lie at 5–27, 40–57, 96–118, 131–150, 160–182, 202–224, 239–256, 268–290, 317–339, 385–407, and 422–444; these read LGAC…ILCS, LIFT…IIML, AVYR…MLCV, GFWF…AFYI, FYFG…IDFA, YAGL…ALMF, FISL…AAVL, LLQA…SSIP, QWWD…FISL, TYSY…MTLT, and WTAV…WTLV.

This sequence belongs to the TDE1 family.

The protein localises to the cell membrane. The enzyme catalyses a 1,2-diacyl-sn-glycero-3-phospho-L-serine(in) = a 1,2-diacyl-sn-glycero-3-phospho-L-serine(out). It catalyses the reaction a 1,2-diacyl-sn-glycero-3-phosphocholine(in) = a 1,2-diacyl-sn-glycero-3-phosphocholine(out). The catalysed reaction is a 1,2-diacyl-sn-glycero-3-phosphoethanolamine(in) = a 1,2-diacyl-sn-glycero-3-phosphoethanolamine(out). Functionally, non-ATP-dependent, non-specific lipid transporter for phosphatidylserine, phosphatidylcholine, and phosphatidylethanolamine. Functions as a scramblase that flips lipids in both directions across the membrane. In contrast to SERINC3 and SERINC5, has no effect on HIV-1 particles infectivity. The sequence is that of Serine incorporator 2 from Homo sapiens (Human).